The sequence spans 160 residues: Transcription elongation factor GreA (160 aa).

Positions 1–71 (MAEKTYPMTL…GQISTLETKI (71 aa)) form a coiled coil.

Belongs to the GreA/GreB family.

Functionally, necessary for efficient RNA polymerase transcription elongation past template-encoded arresting sites. The arresting sites in DNA have the property of trapping a certain fraction of elongating RNA polymerases that pass through, resulting in locked ternary complexes. Cleavage of the nascent transcript by cleavage factors such as GreA or GreB allows the resumption of elongation from the new 3'terminus. GreA releases sequences of 2 to 3 nucleotides. This chain is Transcription elongation factor GreA, found in Streptococcus pyogenes serotype M3 (strain ATCC BAA-595 / MGAS315).